We begin with the raw amino-acid sequence, 391 residues long: Cilia- and flagella-associated protein 263 (391 aa).

The segment at 1–21 (MTDDDSETSASETQAQEESDL) is disordered. Coiled coils occupy residues 95–243 (LSVD…NQEL) and 294–369 (LRKE…LKGY).

The protein belongs to the CFAP263 family. As to quaternary structure, forms a complex with CFAP184; the interaction is required for functional activity in cilia. Interacts with HAP1 and PCM1.

Its subcellular location is the cytoplasm. The protein localises to the cytoskeleton. It is found in the microtubule organizing center. It localises to the centrosome. The protein resides in the centriolar satellite. Its subcellular location is the cell projection. The protein localises to the cilium. Component of centriolar satellites contributing to primary cilium formation. In complex with CFAP263, acts as a regulator of ciliary beating that connects radial spoke 3 (RS3) to the inner dynein arm (IDA) and the nexin-dynein regulatory complex (N-DRC). The complex is positioned parallel to N-DRC and forms a connection between the arch at the base of RS3, the IDA tail and N-DRC. This chain is Cilia- and flagella-associated protein 263 (CFAP263), found in Bos taurus (Bovine).